The chain runs to 328 residues: Phenylalanine--tRNA ligase alpha subunit (328 aa).

Mg(2+) is bound at residue E253.

This sequence belongs to the class-II aminoacyl-tRNA synthetase family. Phe-tRNA synthetase alpha subunit type 1 subfamily. In terms of assembly, tetramer of two alpha and two beta subunits. Mg(2+) serves as cofactor.

The protein localises to the cytoplasm. The catalysed reaction is tRNA(Phe) + L-phenylalanine + ATP = L-phenylalanyl-tRNA(Phe) + AMP + diphosphate + H(+). This Coxiella burnetii (strain CbuG_Q212) (Coxiella burnetii (strain Q212)) protein is Phenylalanine--tRNA ligase alpha subunit.